Reading from the N-terminus, the 331-residue chain is MNTILNQIYLGHSLTESETYKLFKLIMTGKINDIQLSSILTAINIRGESENEIIGAVRACLKYSKSFPKQNYMFSDIVGTGGDSSNSINISTASAFVGATCGLKIVKHCNTSISSMTGSCDLLKEFNIDLHASCEKSQNMLNKLNICFLFAPKYHANFKYISLVRKTLKIRTLFNILGPLINPSKPPLSLVGVYSTKLMVPMANVLKKLNSYHAIVVHSDHTDEVTLHDSTNVTELKNNNIISYTLCPDDFGVKYYNKNAILGGTPKENYEIIKYVLKGKGPHAISETIAVNVALLLKLYGNENLKKNTKCALKIIQSGKVYEKIIALSKF.

Residues G79, 82–83 (GD), S87, 89–92 (NIST), 107–115 (KHCNTSISS), and S119 contribute to the 5-phospho-alpha-D-ribose 1-diphosphate site. G79 provides a ligand contact to anthranilate. Position 91 (S91) interacts with Mg(2+). N110 contacts anthranilate. Residue R165 coordinates anthranilate. 2 residues coordinate Mg(2+): D223 and E224.

Belongs to the anthranilate phosphoribosyltransferase family. Homodimer. Mg(2+) serves as cofactor.

It carries out the reaction N-(5-phospho-beta-D-ribosyl)anthranilate + diphosphate = 5-phospho-alpha-D-ribose 1-diphosphate + anthranilate. It functions in the pathway amino-acid biosynthesis; L-tryptophan biosynthesis; L-tryptophan from chorismate: step 2/5. In terms of biological role, catalyzes the transfer of the phosphoribosyl group of 5-phosphorylribose-1-pyrophosphate (PRPP) to anthranilate to yield N-(5'-phosphoribosyl)-anthranilate (PRA). The sequence is that of Anthranilate phosphoribosyltransferase from Buchnera aphidicola subsp. Schlechtendalia chinensis.